The primary structure comprises 74 residues: uncharacterized protein (74 aa).

This is an uncharacterized protein from Vaccinia virus (strain Copenhagen) (VACV).